The sequence spans 366 residues: Tyrosyl-DNA phosphodiesterase 2 (366 aa).

N-acetylmethionine is present on Met-1. Residues 1–22 (MASGSSSDAAESAEPAAAPAAA) are compositionally biased toward low complexity. A disordered region spans residues 1–30 (MASGSSSDAAESAEPAAAPAAAETEEDQVK). Lys-30 is covalently cross-linked (Glycyl lysine isopeptide (Lys-Gly) (interchain with G-Cter in SUMO2)). A Phosphothreonine; by ACVR1B modification is found at Thr-95. The tract at residues 126 to 130 (NIDGL) is interaction with 5' end of substrate DNA. Asp-128 and Glu-158 together coordinate Mg(2+). An interaction with 5' end of substrate DNA region spans residues 232-237 (HLESTR). Asp-268 (proton donor/acceptor) is an active-site residue. The tract at residues 270–272 (NLR) is interaction with 5' end of substrate DNA.

This sequence belongs to the CCR4/nocturin family. In terms of assembly, interacts with TRAF2, TRAF3, TRAF5, TRAF6, TNFRSF8/CD30, TNFRSF5/CD40, TNFRSF1B/TNF-R75, ETS1, ETS2, FLI1, SMAD3 and ACVR1B/ALK4. Requires Mg(2+) as cofactor. Mn(2+) is required as a cofactor. In terms of processing, ubiquitinated by TRAF6.

Its subcellular location is the nucleus. It localises to the PML body. It is found in the nucleolus. The protein resides in the cytoplasm. In terms of biological role, DNA repair enzyme that can remove a variety of covalent adducts from DNA through hydrolysis of a 5'-phosphodiester bond, giving rise to DNA with a free 5' phosphate. Catalyzes the hydrolysis of dead-end complexes between DNA and the topoisomerase 2 (TOP2) active site tyrosine residue. The 5'-tyrosyl DNA phosphodiesterase activity can enable the repair of TOP2-induced DNA double-strand breaks/DSBs without the need for nuclease activity, creating a 'clean' DSB with 5'-phosphate termini that are ready for ligation. Thereby, protects the transcription of many genes involved in neurological development and maintenance from the abortive activity of TOP2. Hydrolyzes 5'-phosphoglycolates on protruding 5' ends on DSBs due to DNA damage by radiation and free radicals. Has preference for single-stranded DNA or duplex DNA with a 4 base pair overhang as substrate. Also has 3'-tyrosyl DNA phosphodiesterase activity, but less efficiently and much slower than TDP1. Constitutes the major if not only 5'-tyrosyl-DNA phosphodiesterase in cells. Also acts as an adapter by participating in the specific activation of MAP3K7/TAK1 in response to TGF-beta: associates with components of the TGF-beta receptor-TRAF6-TAK1 signaling module and promotes their ubiquitination dependent complex formation. Involved in non-canonical TGF-beta induced signaling routes. May also act as a negative regulator of ETS1 and may inhibit NF-kappa-B activation. Acts as a regulator of ribosome biogenesis following stress. The sequence is that of Tyrosyl-DNA phosphodiesterase 2 (Tdp2) from Rattus norvegicus (Rat).